A 593-amino-acid polypeptide reads, in one-letter code: NADH-quinone oxidoreductase subunit C/D (593 aa).

Positions 1-184 (MTADNALYIP…DPYSLTLAKQ (184 aa)) are NADH dehydrogenase I subunit C. The interval 208–593 (DYMFLNLGPN…IDFVMADVDR (386 aa)) is NADH dehydrogenase I subunit D.

It in the N-terminal section; belongs to the complex I 30 kDa subunit family. This sequence in the C-terminal section; belongs to the complex I 49 kDa subunit family. NDH-1 is composed of 13 different subunits. Subunits NuoB, CD, E, F, and G constitute the peripheral sector of the complex.

It is found in the cell inner membrane. It carries out the reaction a quinone + NADH + 5 H(+)(in) = a quinol + NAD(+) + 4 H(+)(out). Its function is as follows. NDH-1 shuttles electrons from NADH, via FMN and iron-sulfur (Fe-S) centers, to quinones in the respiratory chain. The immediate electron acceptor for the enzyme in this species is believed to be ubiquinone. Couples the redox reaction to proton translocation (for every two electrons transferred, four hydrogen ions are translocated across the cytoplasmic membrane), and thus conserves the redox energy in a proton gradient. This is NADH-quinone oxidoreductase subunit C/D from Pseudomonas savastanoi pv. phaseolicola (strain 1448A / Race 6) (Pseudomonas syringae pv. phaseolicola (strain 1448A / Race 6)).